A 431-amino-acid chain; its full sequence is Adenylosuccinate synthetase (431 aa).

GTP-binding positions include 12–18 (GDEGKGK) and 40–42 (GHT). Asp-13 (proton acceptor) is an active-site residue. Positions 13 and 40 each coordinate Mg(2+). IMP is bound by residues 13-16 (DEGK), 38-41 (NAGH), Thr-128, Arg-142, Gln-223, Thr-238, and Arg-301. The active-site Proton donor is His-41. Residue 297-303 (TVTGRPR) participates in substrate binding. Residues Arg-303, 329 to 331 (SID), and 411 to 413 (SVG) contribute to the GTP site.

The protein belongs to the adenylosuccinate synthetase family. In terms of assembly, homodimer. Mg(2+) is required as a cofactor.

It is found in the cytoplasm. The catalysed reaction is IMP + L-aspartate + GTP = N(6)-(1,2-dicarboxyethyl)-AMP + GDP + phosphate + 2 H(+). Its pathway is purine metabolism; AMP biosynthesis via de novo pathway; AMP from IMP: step 1/2. Functionally, plays an important role in the de novo pathway of purine nucleotide biosynthesis. Catalyzes the first committed step in the biosynthesis of AMP from IMP. This is Adenylosuccinate synthetase from Lacticaseibacillus paracasei (strain ATCC 334 / BCRC 17002 / CCUG 31169 / CIP 107868 / KCTC 3260 / NRRL B-441) (Lactobacillus paracasei).